A 1036-amino-acid chain; its full sequence is Pre-mRNA-processing factor 39-2 (1036 aa).

Residues 1–24 (MVTTEVRTAVSDKEPLQRSPELDS) are disordered. 6 HAT repeats span residues 62–94 (DDIEKLCLVYDAFLLEFPLCHGYWRKYAYHKIK), 96–128 (CTLEDAVEVFERAVQAATYSVAVWLDYCAFAVA), 131–166 (EDPHDVSRLFERGLSFIGKDYSCCTLWDKYIEYLLG), 168–201 (QQWSSLANVYLRTLKYPSKKLDLYYKNFRKIAAS), 278–310 (CFETQIRRPYFHVKPLDTNQLDNWHAYLSFGET), and 312–344 (GDFDWAINLYERCLIPCANYTEFWFRYVDFVES). 3 disordered regions span residues 595 to 618 (GISSIVDSPPKEKKESSLDSYGTQ), 714 to 767 (PSGS…PVGT), and 995 to 1036 (KGDE…ISSI). Positions 714–726 (PSGSQSPQSYQSQ) are enriched in low complexity. Residues 740–755 (RDLNQMHRDSKPRSQE) show a composition bias toward basic and acidic residues. Residues 1002-1036 (SMPQGSTTNSDIQKSQESGAVNEANLSSDTSISSI) are compositionally biased toward polar residues.

It belongs to the PRP39 family.

Its subcellular location is the nucleus. Its function is as follows. Involved in pre-mRNA splicing. This chain is Pre-mRNA-processing factor 39-2, found in Arabidopsis thaliana (Mouse-ear cress).